Here is a 306-residue protein sequence, read N- to C-terminus: Palmitoyl-protein thioesterase 1 (306 aa).

The signal sequence occupies residues 1–27 (MASPGCLWLLAVALLPWTCASRALQHL). The S-palmitoyl cysteine; by ZDHHC3 and ZDHHC7 moiety is linked to residue Cys6. Cystine bridges form between Cys45–Cys46, Cys96–Cys128, and Cys152–Cys160. Residue Ser115 is part of the active site. N-linked (GlcNAc...) asparagine glycosylation is found at Asn197, Asn212, and Asn232. Catalysis depends on residues Asp233 and His289.

The protein belongs to the palmitoyl-protein thioesterase family. In terms of assembly, interacts with CLN5. Interacts with ATP5F1A and ATP5F1B. Post-translationally, glycosylated.

The protein resides in the lysosome. It localises to the secreted. The protein localises to the golgi apparatus. It is found in the endoplasmic reticulum. It carries out the reaction S-hexadecanoyl-L-cysteinyl-[protein] + H2O = L-cysteinyl-[protein] + hexadecanoate + H(+). It catalyses the reaction hexadecanoyl-CoA + H2O = hexadecanoate + CoA + H(+). The enzyme catalyses S-hexadecanoyl-N-acetylcysteamine + H2O = N-acetylcysteamine + hexadecanoate + H(+). The catalysed reaction is S-hexadecanoyl-N-acetylcysteine methyl ester + H2O = N-acetylcysteine methyl ester + hexadecanoate + H(+). Palmitoylation reduces PPT1 enzymatic activity. Its function is as follows. Has thioesterase activity against fatty acid thioesters with 14 -18 carbons, including palmitoyl-CoA, S-palmitoyl-N-acetylcysteamine, and palmitoylated proteins. In contrast to PPT2, PPT1 can hydrolyze palmitoylated proteins and palmitoylcysteine. In Homo sapiens (Human), this protein is Palmitoyl-protein thioesterase 1 (PPT1).